A 537-amino-acid polypeptide reads, in one-letter code: 2-succinyl-5-enolpyruvyl-6-hydroxy-3-cyclohexene-1-carboxylate synthase (537 aa).

This sequence belongs to the TPP enzyme family. MenD subfamily. Homodimer. Requires Mg(2+) as cofactor. The cofactor is Mn(2+). Thiamine diphosphate is required as a cofactor.

The enzyme catalyses isochorismate + 2-oxoglutarate + H(+) = 5-enolpyruvoyl-6-hydroxy-2-succinyl-cyclohex-3-ene-1-carboxylate + CO2. The protein operates within quinol/quinone metabolism; 1,4-dihydroxy-2-naphthoate biosynthesis; 1,4-dihydroxy-2-naphthoate from chorismate: step 2/7. Its pathway is quinol/quinone metabolism; menaquinone biosynthesis. Catalyzes the thiamine diphosphate-dependent decarboxylation of 2-oxoglutarate and the subsequent addition of the resulting succinic semialdehyde-thiamine pyrophosphate anion to isochorismate to yield 2-succinyl-5-enolpyruvyl-6-hydroxy-3-cyclohexene-1-carboxylate (SEPHCHC). The chain is 2-succinyl-5-enolpyruvyl-6-hydroxy-3-cyclohexene-1-carboxylate synthase from Desulfotalea psychrophila (strain LSv54 / DSM 12343).